Here is a 540-residue protein sequence, read N- to C-terminus: Growth factor receptor-bound protein 14 (540 aa).

Thr2 carries the post-translational modification N-acetylthreonine. At Gln9 the chain carries Phosphothreonine. One can recognise a Ras-associating domain in the interval 106–192 (KKQVIKVYSE…NKLYFRKNYA (87 aa)). In terms of domain architecture, PH spans 234–342 (YPEIHGFLHA…WVTAIRLLKY (109 aa)). A phosphoserine mark is found at Ser372 and Ser375. In terms of domain architecture, SH2 spans 439–535 (WFHHKISRDE…VLPCKLKHYC (97 aa)).

It belongs to the GRB7/10/14 family. In terms of assembly, interacts with the cytoplasmic domain of the autophosphorylated insulin receptor (INSR), through the SH2 domain. Interacts with GRB14 (via BPS domain); this interaction protects the tyrosines in the activation loop on INSR from dephosphorylation. Binds to the ankyrin repeat region of TNKS2 via its N-terminus. Interacts with activated NRAS. Interacts (via SH2 domain) with TEK/TIE2 (tyrosine phosphorylated). In terms of processing, phosphorylated on serine residues. Phosphorylated on tyrosine residues by TEK/TIE2. In terms of tissue distribution, expressed at high levels in the liver, kidney, pancreas, testis, ovary, heart and skeletal muscle.

Its subcellular location is the cytoplasm. It localises to the endosome membrane. Functionally, adapter protein which modulates coupling of cell surface receptor kinases with specific signaling pathways. Binds to, and suppresses signals from, the activated insulin receptor (INSR). Potent inhibitor of insulin-stimulated MAPK3 phosphorylation. Plays a critical role regulating PDPK1 membrane translocation in response to insulin stimulation and serves as an adapter protein to recruit PDPK1 to activated insulin receptor, thus promoting PKB/AKT1 phosphorylation and transduction of the insulin signal. The sequence is that of Growth factor receptor-bound protein 14 (GRB14) from Homo sapiens (Human).